The primary structure comprises 479 residues: UDP-glycosyltransferase 84A3 (479 aa).

The Proton acceptor role is filled by His19. His19 is an an anthocyanidin binding site. Gln346, His361, Trp364, Asn365, Ser366, and Glu369 together coordinate UDP-alpha-D-glucose. Gly384 contacts an anthocyanidin. UDP-alpha-D-glucose contacts are provided by Asp385 and Gln386.

It belongs to the UDP-glycosyltransferase family.

The enzyme catalyses (E)-4-coumarate + UDP-alpha-D-glucose = 4-O-(beta-D-glucosyl)-trans-4-coumarate + UDP + H(+). The catalysed reaction is (E)-ferulate + UDP-alpha-D-glucose = 1-O-[(E)-feruloyl]-beta-D-glucose + UDP. It carries out the reaction (E)-caffeate + UDP-alpha-D-glucose = 1-O-[(E)-caffeoyl]-beta-D-glucose + UDP. It catalyses the reaction (E)-sinapate + UDP-alpha-D-glucose = 1-O-(trans-sinapoyl)-beta-D-glucose + UDP. The enzyme catalyses (E)-cinnamate + UDP-alpha-D-glucose = 1-O-(trans-cinnamoyl)-beta-D-glucose + UDP. In terms of biological role, UDP-glucosyltransferase that forms glucose esters with phenylpropanoids. Glucosylates 4-coumarate, ferulate, caffeate, sinapate and cinnamate. The polypeptide is UDP-glycosyltransferase 84A3 (Arabidopsis thaliana (Mouse-ear cress)).